We begin with the raw amino-acid sequence, 376 residues long: Heterodimeric geranylgeranyl pyrophosphate synthase large subunit 2 (376 aa).

The signal sequence occupies residues 1-24 (MEPQILFLYLSLFILSLNFFFTNL). Residues Lys125, Arg128, and His157 each contribute to the isopentenyl diphosphate site. Positions 164 and 170 each coordinate Mg(2+). Residue Arg175 participates in dimethylallyl diphosphate binding. Arg176 serves as a coordination point for isopentenyl diphosphate. Positions 261, 262, 299, 316, and 326 each coordinate dimethylallyl diphosphate.

This sequence belongs to the FPP/GGPP synthase family. Monomer. Part of a heterodimeric geranyl(geranyl)diphosphate synthase. Interacts with GGR. It depends on Mg(2+) as a cofactor. As to expression, mainly expressed in flowers.

The protein resides in the endoplasmic reticulum. It carries out the reaction isopentenyl diphosphate + dimethylallyl diphosphate = (2E)-geranyl diphosphate + diphosphate. The catalysed reaction is isopentenyl diphosphate + (2E)-geranyl diphosphate = (2E,6E)-farnesyl diphosphate + diphosphate. The enzyme catalyses isopentenyl diphosphate + (2E,6E)-farnesyl diphosphate = (2E,6E,10E)-geranylgeranyl diphosphate + diphosphate. The protein operates within isoprenoid biosynthesis; farnesyl diphosphate biosynthesis; farnesyl diphosphate from geranyl diphosphate and isopentenyl diphosphate: step 1/1. It participates in isoprenoid biosynthesis; geranyl diphosphate biosynthesis; geranyl diphosphate from dimethylallyl diphosphate and isopentenyl diphosphate: step 1/1. Its pathway is isoprenoid biosynthesis; geranylgeranyl diphosphate biosynthesis; geranylgeranyl diphosphate from farnesyl diphosphate and isopentenyl diphosphate: step 1/1. Heterodimeric geranyl(geranyl)-diphosphate (GPP) synthase large subunit. In vitro, the large subunit catalyzes mainly the trans-addition of the three molecules of IPP onto DMAPP to form geranylgeranyl pyrophosphate while the small subunit alone is inactive. Upon association of the two subunits, the product profile is not changed. This Arabidopsis thaliana (Mouse-ear cress) protein is Heterodimeric geranylgeranyl pyrophosphate synthase large subunit 2 (GGPPS2).